The sequence spans 266 residues: tRNA pseudouridine synthase A (266 aa).

Catalysis depends on Asp-53, which acts as the Nucleophile. Residue Tyr-109 coordinates substrate.

Belongs to the tRNA pseudouridine synthase TruA family.

The enzyme catalyses uridine(38/39/40) in tRNA = pseudouridine(38/39/40) in tRNA. Functionally, formation of pseudouridine at positions 38, 39 and 40 in the anticodon stem and loop of transfer RNAs. In Methanocella arvoryzae (strain DSM 22066 / NBRC 105507 / MRE50), this protein is tRNA pseudouridine synthase A.